The primary structure comprises 270 residues: Pantoate kinase (270 aa).

This sequence belongs to the GHMP kinase family. PoK subfamily.

It catalyses the reaction (R)-pantoate + ATP = (R)-4-phosphopantoate + ADP + H(+). Its pathway is cofactor biosynthesis; coenzyme A biosynthesis. Phosphorylates (R)-pantoate to form (R)-4-phosphopantoate in the CoA biosynthesis pathway. This is Pantoate kinase from Methanocaldococcus jannaschii (strain ATCC 43067 / DSM 2661 / JAL-1 / JCM 10045 / NBRC 100440) (Methanococcus jannaschii).